The chain runs to 426 residues: FK506-binding protein 3 (426 aa).

Disordered regions lie at residues 37–143 (SLDP…PKHQ) and 171–314 (TGNY…KKKK). Acidic residues-rich tracts occupy residues 65–94 (DYFE…EAEE), 111–131 (EDEE…DDVS), and 181–225 (QDEE…SEEE). Basic and acidic residues-rich tracts occupy residues 226-257 (GTPK…ESTS), 264-278 (KKDE…KELE), and 287-311 (VEKD…DGDK). The PPIase FKBP-type domain maps to 340-426 (GAKVGIRYIG…TFDIKLVSLK (87 aa)).

Belongs to the FKBP-type PPIase family. FKBP3/4 subfamily.

It is found in the nucleus. Its subcellular location is the nucleolus. It carries out the reaction [protein]-peptidylproline (omega=180) = [protein]-peptidylproline (omega=0). Inhibited by both FK506 and rapamycin. Functionally, PPIases accelerate the folding of proteins. It catalyzes the cis-trans isomerization of proline imidic peptide bonds in oligopeptides. This is FK506-binding protein 3 (FPR3) from Candida albicans (strain SC5314 / ATCC MYA-2876) (Yeast).